We begin with the raw amino-acid sequence, 123 residues long: Protein HesB, heterocyst (123 aa).

Belongs to the HesB/IscA family.

In terms of biological role, may be required for efficient nitrogen fixation. The sequence is that of Protein HesB, heterocyst (hesB1) from Trichormus variabilis (strain ATCC 29413 / PCC 7937) (Anabaena variabilis).